Reading from the N-terminus, the 202-residue chain is MRLIVGLGNPGARYAGNRHNIGFLAVDAIARQHRASPFRHRFQGEAAEVVLGTERAILLKPSTFMNESGRAVSEAQRFYKIPLADVIVLHDELDLAPAKLRVKRGGGNAGHNGLRSITAQCGNDYRRVRLGIGHPGDKALVHAYVLNDFGKAELPWVEDLCRAVADHAALLAAGEDASFQNKVHLAMAGRGWDDVKTLGARN.

A tRNA-binding site is contributed by Tyr14. The Proton acceptor role is filled by His19. TRNA contacts are provided by Phe64, Asn66, and Asn112.

This sequence belongs to the PTH family. As to quaternary structure, monomer.

The protein localises to the cytoplasm. The enzyme catalyses an N-acyl-L-alpha-aminoacyl-tRNA + H2O = an N-acyl-L-amino acid + a tRNA + H(+). Its function is as follows. Hydrolyzes ribosome-free peptidyl-tRNAs (with 1 or more amino acids incorporated), which drop off the ribosome during protein synthesis, or as a result of ribosome stalling. Functionally, catalyzes the release of premature peptidyl moieties from peptidyl-tRNA molecules trapped in stalled 50S ribosomal subunits, and thus maintains levels of free tRNAs and 50S ribosomes. The polypeptide is Peptidyl-tRNA hydrolase (Methylobacterium radiotolerans (strain ATCC 27329 / DSM 1819 / JCM 2831 / NBRC 15690 / NCIMB 10815 / 0-1)).